Consider the following 152-residue polypeptide: Large ribosomal subunit protein uL30 (152 aa).

Belongs to the universal ribosomal protein uL30 family. Part of the 50S ribosomal subunit.

The sequence is that of Large ribosomal subunit protein uL30 from Archaeoglobus fulgidus (strain ATCC 49558 / DSM 4304 / JCM 9628 / NBRC 100126 / VC-16).